Reading from the N-terminus, the 2789-residue chain is Multiple epidermal growth factor-like domains protein 8 (2789 aa).

The N-terminal stretch at 1–27 (MALGGALALALALALAVLGPLSLRVLA) is a signal peptide. The Extracellular segment spans residues 28 to 2591 (GDCKGQRQVL…FFRQDQAHID (2564 aa)). Cystine bridges form between Cys30–Cys57, Cys142–Cys152, Cys146–Cys158, Cys174–Cys184, Cys178–Cys191, and Cys193–Cys202. The CUB 1 domain occupies 30-140 (CKGQRQVLRE…LGFNASFRFS (111 aa)). Residue Asn50 is glycosylated (N-linked (GlcNAc...) asparagine). EGF-like domains lie at 138–168 (RFSLCPGGCQNHGQCKSPGVCVCEPGWGGPD) and 170–203 (GLQECSAYCGSHGTCASTLGPCRCEPGFLGRACD). Kelch repeat units lie at residues 241 to 287 (LLAV…AVAW), 290 to 338 (LLVL…AGHA), 346 to 399 (WLYV…FHAP), 402 to 453 (TLLV…FHTA), 459 to 511 (YMVV…APPS), and 525 to 575 (VLLV…SRDP). PSI domains follow at residues 561–613 (YCSM…SDCQ), 847–899 (ACTS…ALCP), and 900–947 (LCEE…EECP). Asn1048 is a glycosylation site (N-linked (GlcNAc...) asparagine). In terms of domain architecture, EGF-like 3; calcium-binding spans 1074–1115 (DVDECRLGLARCHPRATCLNTPLSYECHCQRGYQGDGITHCN). 16 disulfides stabilise this stretch: Cys1078-Cys1091, Cys1085-Cys1100, Cys1102-Cys1114, Cys1163-Cys1171, Cys1165-Cys1179, Cys1182-Cys1191, Cys1194-Cys1208, Cys1211-Cys1224, Cys1213-Cys1231, Cys1233-Cys1242, Cys1245-Cys1259, Cys1263-Cys1302, Cys1336-Cys1367, Cys1407-Cys1421, Cys1415-Cys1433, and Cys1435-Cys1444. Laminin EGF-like domains follow at residues 1163–1210 (CGCS…GCRP) and 1211–1261 (CQCN…SCFR). N-linked (GlcNAc...) asparagine glycosylation occurs at Asn1226. One can recognise a CUB 2 domain in the interval 1263–1405 (CGGRALLTNV…WGFNASVGSA (143 aa)). The N-linked (GlcNAc...) asparagine glycan is linked to Asn1271. Phosphothreonine is present on Thr1353. An EGF-like 4 domain is found at 1403-1445 (GSARCGSGGPGSCPVPQECVPQDGAAGAGLCRCPQGWAGPHCR). Kelch repeat units lie at residues 1522–1570 (TLWM…SFHA), 1580–1629 (AMYL…TARR), 1632–1679 (SLLL…SAVY), 1685–1735 (SLYV…HASA), 1740–1787 (TMVV…ESVA), and 1796–1841 (RLYI…WCHG). PSI domains lie at 1820–1860 (PCRL…PPCS), 1868–1923 (ECRR…NDCR), 2004–2062 (PCHL…ESCS), and 2064–2121 (GCAQ…LSCP). N-linked (GlcNAc...) asparagine glycosylation is present at Asn2010. The EGF-like 5 domain maps to 2122–2160 (PEDECANGHHDCNETQNCHDQPHGYECSCKTGYTMDNVT). Cystine bridges form between Cys2126–Cys2139 and Cys2133–Cys2148. Residues Asn2158 and Asn2173 are each glycosylated (N-linked (GlcNAc...) asparagine). 8 cysteine pairs are disulfide-bonded: Cys2197–Cys2205, Cys2199–Cys2214, Cys2217–Cys2226, Cys2229–Cys2243, Cys2324–Cys2333, Cys2326–Cys2341, Cys2343–Cys2368, and Cys2371–Cys2385. 2 Laminin EGF-like domains span residues 2197 to 2245 (CRCN…TCRP) and 2324 to 2387 (CQCN…QCYR). The disordered stretch occupies residues 2468–2508 (VHIQPPPPPPPPPPPADGVPRVAADLGGLGTGSGSGSPVEP). The span at 2471–2484 (QPPPPPPPPPPPAD) shows a compositional bias: pro residues. Residues 2592–2612 (LFVFFSVFFSCFFLFLSLCVL) traverse the membrane as a helical segment. At 2613–2789 (LWKAKQALDQ…SQDNLTSMSL (177 aa)) the chain is on the cytoplasmic side. Positions 2762–2776 (GGAGGSGHGGGGGRK) are enriched in gly residues. Residues 2762–2789 (GGAGGSGHGGGGGRKGLLSQDNLTSMSL) form a disordered region. The segment covering 2780–2789 (SQDNLTSMSL) has biased composition (polar residues).

In terms of tissue distribution, highest expression in brain, testis and kidney.

It is found in the membrane. Acts as a negative regulator of hedgehog signaling. This is Multiple epidermal growth factor-like domains protein 8 (Megf8) from Mus musculus (Mouse).